We begin with the raw amino-acid sequence, 309 residues long: tRNA pseudouridine synthase B (309 aa).

Aspartate 39 serves as the catalytic Nucleophile.

This sequence belongs to the pseudouridine synthase TruB family. Type 1 subfamily.

The catalysed reaction is uridine(55) in tRNA = pseudouridine(55) in tRNA. In terms of biological role, responsible for synthesis of pseudouridine from uracil-55 in the psi GC loop of transfer RNAs. This Bacillus subtilis (strain 168) protein is tRNA pseudouridine synthase B.